The primary structure comprises 371 residues: Palmitoyl-monogalactosyldiacylglycerol delta-7 desaturase, chloroplastic (371 aa).

Residues 1–67 constitute a chloroplast transit peptide; the sequence is MASLLTKPKP…KGLKRDVTTA (67 aa). The next 2 helical transmembrane spans lie at 103–123 and 127–147; these read FGAV…PFQF and AVSV…TLSF. The Histidine box-1 signature appears at 148–153; the sequence is HRNLSH. Positions 185–189 match the Histidine box-2 motif; the sequence is HRYHH. A helical membrane pass occupies residues 251–271; the sequence is ALAVALYAMGGFPFIVWGMGV. A Histidine box-3 motif is present at residues 317-321; the sequence is HNNHH.

It belongs to the fatty acid desaturase type 1 family. Fe(2+) serves as cofactor. In terms of tissue distribution, highly expressed in young leaves. Low expression in roots.

It is found in the plastid. The protein localises to the chloroplast membrane. It catalyses the reaction a 1-acyl-2-hexadecanoyl-glycerolipid + 2 reduced [2Fe-2S]-[ferredoxin] + O2 + 2 H(+) = a 1-acyl-2-[(7Z)-hexadecenoyl]-glycerolipid + 2 oxidized [2Fe-2S]-[ferredoxin] + 2 H2O. The protein operates within lipid metabolism; oxylipin biosynthesis. Its pathway is lipid metabolism; polyunsaturated fatty acid biosynthesis. Functionally, fatty acid desaturase involved in the first desaturation step leading to the formation of hexadeca 7,10,13-trienoic acid (16:3(7Z,10Z,13Z)), the major functional components of thylakoid membranes. Required for chloroplast biogenesis at low temperature. Also indirectly involved in the production of the oxylipin dinor-oxo-phyto-dienoic acid implicated in wound signaling. The sequence is that of Palmitoyl-monogalactosyldiacylglycerol delta-7 desaturase, chloroplastic from Arabidopsis thaliana (Mouse-ear cress).